Here is a 217-residue protein sequence, read N- to C-terminus: 3,4-dihydroxy-2-butanone 4-phosphate synthase (217 aa).

D-ribulose 5-phosphate contacts are provided by residues R37–E38, D42, R150–T154, and E174. Mg(2+) is bound at residue E38. A Mg(2+)-binding site is contributed by H153.

Belongs to the DHBP synthase family. As to quaternary structure, homodimer. Requires Mg(2+) as cofactor. Mn(2+) is required as a cofactor.

The catalysed reaction is D-ribulose 5-phosphate = (2S)-2-hydroxy-3-oxobutyl phosphate + formate + H(+). It functions in the pathway cofactor biosynthesis; riboflavin biosynthesis; 2-hydroxy-3-oxobutyl phosphate from D-ribulose 5-phosphate: step 1/1. Functionally, catalyzes the conversion of D-ribulose 5-phosphate to formate and 3,4-dihydroxy-2-butanone 4-phosphate. The polypeptide is 3,4-dihydroxy-2-butanone 4-phosphate synthase (Shewanella loihica (strain ATCC BAA-1088 / PV-4)).